The primary structure comprises 212 residues: uncharacterized protein (212 aa).

Glycine 53, glutamate 74, and aspartate 97 together coordinate S-adenosyl-L-methionine.

Belongs to the methyltransferase superfamily. YrrT family.

Its function is as follows. Could be a S-adenosyl-L-methionine-dependent methyltransferase. This is an uncharacterized protein from Bacillus cereus (strain ATCC 14579 / DSM 31 / CCUG 7414 / JCM 2152 / NBRC 15305 / NCIMB 9373 / NCTC 2599 / NRRL B-3711).